The primary structure comprises 410 residues: Testis-specific Y-encoded-like protein 6 (410 aa).

Disordered stretches follow at residues 1-31 (MSLP…EKSK) and 46-69 (PIVF…DGGH). Position 9 is a phosphoserine (Ser9). The segment covering 18–31 (EDPHQGQRSREKSK) has biased composition (basic and acidic residues).

Belongs to the nucleosome assembly protein (NAP) family.

This is Testis-specific Y-encoded-like protein 6 (TSPYL6) from Homo sapiens (Human).